Here is a 227-residue protein sequence, read N- to C-terminus: E3 ubiquitin-protein ligase ZNRF1 (227 aa).

Residues 1–42 are disordered; sequence MGGKQSTAARSRGPFPGVSTDDSAVPPPGGAPHFGHYRTGGG. G2 carries N-myristoyl glycine lipidation. The interval 2-10 is required for endosomal and lysosomal localization and myristoylation; that stretch reads GGKQSTAAR. A phosphoserine mark is found at S50, S52, and S53. A disordered region spans residues 68–105; it reads PFGLYTPASRGTGDSERAPGGGGSASDSTYAHGNGYQE. A Phosphotyrosine; by SRC modification is found at Y103. S123 carries the phosphoserine modification. The segment at 184 to 225 adopts an RING-type; atypical zinc-finger fold; sequence CVICLEELLQGDTIARLPCLCIYHKSCIDSWFEVNRSCPEHP.

Interacts with AKT1, GLUL and TUBB2A. Interacts with ZNRF2. Interacts (via its RING domain) with UBE2N. Interacts (when phosphorylated) with YWHAE. N-myristoylation targets ZNRF1 to intracellular membranes. In terms of processing, phosphorylated by SRC at Tyr-103; leading to 'Lys-63'-linked ubiquitination of TLR3, lysosomal trafficking and degradation. As to expression, expressed primarily in the nervous system, with expression higher in developing brain relative to adult. Expressed at low levels in testis and thymus.

The protein resides in the endosome. It is found in the lysosome. Its subcellular location is the membrane. It localises to the cytoplasmic vesicle. The protein localises to the secretory vesicle. The protein resides in the synaptic vesicle membrane. It catalyses the reaction S-ubiquitinyl-[E2 ubiquitin-conjugating enzyme]-L-cysteine + [acceptor protein]-L-lysine = [E2 ubiquitin-conjugating enzyme]-L-cysteine + N(6)-ubiquitinyl-[acceptor protein]-L-lysine.. The protein operates within protein modification; protein ubiquitination. Its function is as follows. E3 ubiquitin-protein ligase that plays a role in different processes including cell differentiation, receptor recycling or regulation of inflammation. Mediates the ubiquitination of AKT1 and GLUL, thereby playing a role in neuron cells differentiation. Plays a role in the establishment and maintenance of neuronal transmission and plasticity. Regulates Schwann cells differentiation by mediating ubiquitination of GLUL. Promotes neurodegeneration by mediating 'Lys-48'-linked polyubiquitination and subsequent degradation of AKT1 in axons: degradation of AKT1 prevents AKT1-mediated phosphorylation of GSK3B, leading to GSK3B activation and phosphorylation of DPYSL2/CRMP2 followed by destabilization of microtubule assembly in axons. Ubiquitinates the Na(+)/K(+) ATPase alpha-1 subunit/ATP1A1 and thereby influences its endocytosis and/or degradation. Controls ligand-induced EGFR signaling via mediating receptor ubiquitination and recruitment of the ESCRT machinery. Acts as a negative feedback mechanism controlling TLR3 trafficking by mediating TLR3 'Lys-63'-linked polyubiquitination to reduce type I IFN production. Modulates inflammation by promoting caveolin-1/CAV1 ubiquitination and degradation to regulate TLR4-activated immune response. The polypeptide is E3 ubiquitin-protein ligase ZNRF1 (ZNRF1) (Homo sapiens (Human)).